The following is a 106-amino-acid chain: Putative cytochrome c oxidase subunit 7A3, mitochondrial (106 aa).

Residues 1–23 (MLWNLLALHQIGQRTISTASHRH) constitute a mitochondrion transit peptide.

Belongs to the cytochrome c oxidase VIIa family.

The protein localises to the mitochondrion inner membrane. The protein is Putative cytochrome c oxidase subunit 7A3, mitochondrial (COX7A2P2) of Homo sapiens (Human).